The primary structure comprises 140 residues: PDZ domain-containing protein 11 (140 aa).

A PDZ domain is found at 47–129 (TVVLKKPPGA…ITMRVRYFPY (83 aa)).

The protein localises to the cytoplasm. This is PDZ domain-containing protein 11 (PDZD11) from Gallus gallus (Chicken).